Here is a 295-residue protein sequence, read N- to C-terminus: Diaminopimelate epimerase (295 aa).

Residues N11 and N67 each coordinate substrate. The Proton donor role is filled by C76. Residues 77 to 78 (GN), N171, N210, and 228 to 229 (ER) contribute to the substrate site. The Proton acceptor role is filled by C237. Position 238 to 239 (238 to 239 (GT)) interacts with substrate.

Belongs to the diaminopimelate epimerase family. As to quaternary structure, homodimer.

It is found in the cytoplasm. It catalyses the reaction (2S,6S)-2,6-diaminopimelate = meso-2,6-diaminopimelate. Its pathway is amino-acid biosynthesis; L-lysine biosynthesis via DAP pathway; DL-2,6-diaminopimelate from LL-2,6-diaminopimelate: step 1/1. Its function is as follows. Catalyzes the stereoinversion of LL-2,6-diaminopimelate (L,L-DAP) to meso-diaminopimelate (meso-DAP), a precursor of L-lysine. In Methanocaldococcus jannaschii (strain ATCC 43067 / DSM 2661 / JAL-1 / JCM 10045 / NBRC 100440) (Methanococcus jannaschii), this protein is Diaminopimelate epimerase.